A 338-amino-acid polypeptide reads, in one-letter code: UbiA prenyltransferase domain-containing protein 1 (338 aa).

The segment at 1-39 (MAAVQAPGEKINIQAGETTQVGDTDQQRNDWPEEDRLPE) is disordered. Residue Ala2 is modified to N-acetylalanine. Polar residues predominate over residues 15-24 (AGETTQVGDT). Over residues 25-39 (DQQRNDWPEEDRLPE) the composition is skewed to basic and acidic residues. 8 helical membrane passes run 83 to 103 (LLLG…LVNT), 134 to 154 (FGVF…YLST), 160 to 180 (LALI…GIGF), 188 to 208 (LVIL…VQVG), 209 to 229 (SLAI…EAIL), 245 to 267 (IVTL…LLFL), 277 to 297 (THCS…FSLE), and 315 to 335 (LNLL…AGSL).

The protein belongs to the UbiA prenyltransferase family. In terms of assembly, interacts with HMGCR and SOAT1.

It localises to the endoplasmic reticulum membrane. It is found in the golgi apparatus membrane. Its subcellular location is the mitochondrion membrane. It carries out the reaction menadiol + (2E,6E,10E)-geranylgeranyl diphosphate = menaquinol-4 + diphosphate. The enzyme catalyses all-trans-decaprenyl diphosphate + 4-hydroxybenzoate = 4-hydroxy-3-(all-trans-decaprenyl)benzoate + diphosphate. It participates in quinol/quinone metabolism; menaquinone biosynthesis. Its pathway is cofactor biosynthesis; ubiquinone biosynthesis. In terms of biological role, prenyltransferase that mediates the formation of menaquinone-4 (MK-4) and coenzyme Q10. MK-4 is a vitamin K2 isoform required for endothelial cell development. Mediates the conversion of phylloquinone (PK) into MK-4, probably by cleaving the side chain of phylloquinone (PK) to release 2-methyl-1,4-naphthoquinone (menadione; K3) and then prenylating it with geranylgeranyl pyrophosphate (GGPP) to form MK-4. Also plays a role in cardiovascular development independently of MK-4 biosynthesis, by acting as a coenzyme Q10 biosynthetic enzyme: coenzyme Q10, also named ubiquinone, plays an important antioxidant role in the cardiovascular system. Mediates biosynthesis of coenzyme Q10 in the Golgi membrane, leading to protect cardiovascular tissues from NOS3/eNOS-dependent oxidative stress. This is UbiA prenyltransferase domain-containing protein 1 (Ubiad1) from Rattus norvegicus (Rat).